A 689-amino-acid chain; its full sequence is 7SK snRNA methylphosphate capping enzyme (689 aa).

At M1 the chain carries N-acetylmethionine. Basic and acidic residues predominate over residues 1-10 (MIEMAAEKEP). A disordered region spans residues 1–167 (MIEMAAEKEP…GGGGFKHPAF (167 aa)). Residues 52–84 (GRCAPSAGSPAAAVGRESPGAAATSSSGPQAQQ) are compositionally biased toward low complexity. Phosphoserine occurs at positions 57, 60, 69, and 101. R117 carries the omega-N-methylarginine modification. Residues S152, S175, and S179 each carry the phosphoserine modification. T213 bears the Phosphothreonine mark. S216, S217, and S254 each carry phosphoserine. Residues 258 to 269 (TGRKRHRHRGQH) show a composition bias toward basic residues. The disordered stretch occupies residues 258–314 (TGRKRHRHRGQHHQQQQAAGGSESHPVPPTAPLTPLLHGEGASQQPRHRGQNRDAPQ). A Phosphothreonine modification is found at T291. Phosphoserine is present on residues S330 and S344. The segment at 332-407 (LPSALQGPSG…HHPLPAAGFK (76 aa)) is disordered. The span at 338–359 (GPSGSLSAPPAASVISAPPSSS) shows a compositional bias: low complexity. Over residues 360 to 369 (SRHRKRRRTS) the composition is skewed to basic residues. A Phosphoserine modification is found at S390. S-adenosyl-L-methionine contacts are provided by residues Y422, R433, 451-453 (GCN), 474-475 (DI), 559-560 (NY), and L581. The region spanning 431–686 (DGRLRVLKPE…PVYLFHKARS (256 aa)) is the Bin3-type SAM domain. K643 participates in a covalent cross-link: Glycyl lysine isopeptide (Lys-Gly) (interchain with G-Cter in SUMO2).

Belongs to the methyltransferase superfamily. In terms of assembly, core component of the 7SK RNP complex, at least composed of 7SK RNA, LARP7, MEPCE, HEXIM1 (or HEXIM2) and P-TEFb (composed of CDK9 and CCNT1/cyclin-T1). Interacts with METTL16. Interacts with RBM7; upon genotoxic stress this interaction is enhanced, triggering the release of inactive P-TEFb complex from the core, yielding to P-TEFb complex activation. In terms of processing, dephosphorylated at Ser-152 by the PNUTS-PP1 complex, promoting RNA polymerase II transcription pause-release. Expressed in chronic myeloid leukemia cells, adrenal gland, brain, cerebellum, kidney, lung, mammary gland and testis. Weakly or not expressed in other tissues.

It is found in the nucleus. The enzyme catalyses a 5'-end triphospho-guanosine-ribonucleotide-snRNA + S-adenosyl-L-methionine = a 5'-end methyltriphosphate-guanosine-ribonucleotide-snRNA + S-adenosyl-L-homocysteine. S-adenosyl-L-methionine-dependent methyltransferase that adds a methylphosphate cap at the 5'-end of 7SK snRNA (7SK RNA), leading to stabilize it. Also has a non-enzymatic function as part of the 7SK RNP complex: the 7SK RNP complex sequesters the positive transcription elongation factor b (P-TEFb) in a large inactive 7SK RNP complex preventing RNA polymerase II phosphorylation and subsequent transcriptional elongation. The 7SK RNP complex also promotes snRNA gene transcription by RNA polymerase II via interaction with the little elongation complex (LEC). In the 7SK RNP complex, MEPCE is required to stabilize 7SK RNA and facilitate the assembly of 7SK RNP complex. MEPCE has a non-enzymatic function in the 7SK RNP complex; interaction with LARP7 within the 7SK RNP complex occluding its catalytic center. Also required for stability of U6 snRNAs. The protein is 7SK snRNA methylphosphate capping enzyme of Homo sapiens (Human).